Reading from the N-terminus, the 313-residue chain is MLGSGRRRLLSTLLQVQKRPCQPCRNMRLVQFQAPHLEEPHVGLESGIGGGVVDLNTFDPALPKTMVQFLERGETALSVARRALAAQLPLIPRSQVTFLAPVTRPDKVICVGLNYADHCQEQNVRVPKNPIIFSKFSSSIVGPYDSIILPPESKEVDWEVEMAVVIGKKGKHIKATDVMAYVAGFTVAHDVSARDWQMRNGKQWLLGKTFDTFCPLGPALVTKDTIADPHNLKISCRVNGEIVQSSNTNQMVFKTEDLIAWVSQFVTLYPGDILLTGTPPGVGMFRKPPVFLKKGDEVQCEIEELGVIINKVV.

Residues 1-84 constitute a mitochondrion transit peptide; it reads MLGSGRRRLL…TALSVARRAL (84 aa). Positions 159, 161, and 190 each coordinate Mg(2+). Lys202 bears the N6-acetyllysine; alternate mark. Lys202 bears the N6-succinyllysine; alternate mark. N6-acetyllysine is present on Lys233.

The protein belongs to the FAH family. Requires Mg(2+) as cofactor. It depends on Mn(2+) as a cofactor.

It localises to the mitochondrion. It carries out the reaction oxaloacetate = enol-oxaloacetate. Its function is as follows. Tautomerase that converts enol-oxaloacetate, a strong inhibitor of succinate dehydrogenase, to the physiological keto form of oxaloacetate. It is thereby required to maximize aerobic respiration efficiency by preventing succinate dehydrogenase inhibition. The sequence is that of Oxaloacetate tautomerase Fahd2a, mitochondrial from Rattus norvegicus (Rat).